Consider the following 372-residue polypeptide: MSRLLGGTLERVCKAVLLLCLLHFLVAVILYFDVYAQHLAFFSRFSARGPAHALHPAASSSSSSSNCSRPNATASSSGLPEVPSALPGPTAPTLPPCPDSPPGLVGRLLIEFTSPMPLERVQRENPGVLMGGRYTPPDCTPAQTVAVIIPFRHREHHLRYWLHYLHPILRRQRLRYGVYVINQHGEDTFNRAKLLNVGFLEALKEDAAYDCFIFSDVDLVPMDDRNLYRCGDQPRHFAIAMDKFGFRLPYAGYFGGVSGLSKAQFLRINGFPNEYWGWGGEDDDIFNRISLTGMKISRPDIRIGRYRMIKHDRDKHNEPNPQRFTKIQNTKLTMKRDGIGSVRYQVLEVSRQPLFTNITVDIGRPPSWPPRG.

Topologically, residues 1–15 are cytoplasmic; that stretch reads MSRLLGGTLERVCKA. Residues 16–36 form a helical; Signal-anchor for type II membrane protein membrane-spanning segment; the sequence is VLLLCLLHFLVAVILYFDVYA. Topologically, residues 37–372 are lumenal; sequence QHLAFFSRFS…GRPPSWPPRG (336 aa). Residues 56-97 are disordered; it reads PAASSSSSSSNCSRPNATASSSGLPEVPSALPGPTAPTLPPC. Residues Asn-66 and Asn-71 are each glycosylated (N-linked (GlcNAc...) asparagine). Residues 66–78 are compositionally biased toward polar residues; it reads NCSRPNATASSSG. Cys-97 and Cys-139 are joined by a disulfide. UDP-alpha-D-galactose contacts are provided by residues 150–154, 189–191, 217–218, and Trp-278; these read PFRHR, FNR, and VD. Cys-211 and Cys-230 form a disulfide bridge. Mn(2+) is bound at residue Asp-218. An N-acetyl-D-glucosamine-binding site is contributed by 280-283; that stretch reads GEDD. His-311 provides a ligand contact to Mn(2+). 311–313 is a binding site for UDP-alpha-D-galactose; sequence HDR. Arg-323 is a binding site for N-acetyl-D-glucosamine. Asn-357 carries N-linked (GlcNAc...) asparagine glycosylation.

This sequence belongs to the glycosyltransferase 7 family. Mn(2+) serves as cofactor. Weakly expressed in various tissues. Highest expression in prostate, testis, ovary, intestine, muscle, and in fetal brain.

The protein localises to the golgi apparatus. It localises to the golgi stack membrane. It carries out the reaction D-glucose + UDP-alpha-D-galactose = lactose + UDP + H(+). The enzyme catalyses an N-acetyl-beta-D-glucosaminyl derivative + UDP-alpha-D-galactose = a beta-D-galactosyl-(1-&gt;4)-N-acetyl-beta-D-glucosaminyl derivative + UDP + H(+). It catalyses the reaction N-acetyl-D-glucosamine + UDP-alpha-D-galactose = beta-D-galactosyl-(1-&gt;4)-N-acetyl-D-glucosamine + UDP + H(+). Its pathway is protein modification; protein glycosylation. Responsible for the synthesis of complex-type N-linked oligosaccharides in many glycoproteins as well as the carbohydrate moieties of glycolipids. Can produce lactose. The sequence is that of Beta-1,4-galactosyltransferase 2 from Homo sapiens (Human).